We begin with the raw amino-acid sequence, 255 residues long: Thrombin-like enzyme batroxobin (255 aa).

A signal peptide spans 1–18 (MVLIRVIANLLILQVSYA). A propeptide spanning residues 19 to 24 (QKSSEL) is cleaved from the precursor. The Peptidase S1 domain occupies 25–247 (VIGGDECDIN…YLPWIQSIIA (223 aa)). 6 disulfide bridges follow: Cys-31/Cys-163, Cys-50/Cys-66, Cys-98/Cys-254, Cys-142/Cys-208, Cys-174/Cys-187, and Cys-198/Cys-223. Active-site charge relay system residues include His-65 and Asp-110. Asn-170 is a glycosylation site (N-linked (GlcNAc...) asparagine). Catalysis depends on Ser-202, which acts as the Charge relay system. The N-linked (GlcNAc...) asparagine glycan is linked to Asn-249.

This sequence belongs to the peptidase S1 family. Snake venom subfamily. Monomer. As to expression, expressed by the venom gland.

It is found in the secreted. The enzyme catalyses Selective cleavage of Arg-|-Xaa bond in fibrinogen, to form fibrin, and release fibrinopeptide A. The specificity of further degradation of fibrinogen varies with species origin of the enzyme.. Thrombin-like snake venom serine protease. Cleaves Arg-Gly bonds in fibrinogen alpha chains (FGA). The polypeptide is Thrombin-like enzyme batroxobin (Bothrops atrox (Barba amarilla)).